The primary structure comprises 185 residues: Small ribosomal subunit protein uS5c (185 aa).

Positions 26–89 (FVERLIKISR…ADGRKNLIKI (64 aa)) constitute an S5 DRBM domain.

It belongs to the universal ribosomal protein uS5 family. Part of the 30S ribosomal subunit. Contacts protein S4.

It is found in the plastid. Its subcellular location is the chloroplast. Functionally, with S4 and S12 plays an important role in translational accuracy. In Trieres chinensis (Marine centric diatom), this protein is Small ribosomal subunit protein uS5c (rps5).